The primary structure comprises 294 residues: Endonuclease 3 (294 aa).

A signal peptide spans 1–24 (MGWSLRMWIVSILVLTQLVNGALC). A divalent metal cation-binding residues include tryptophan 25 and histidine 30. 25 to 30 (WGDAGH) contacts substrate. A disulfide bond links cysteine 34 and cysteine 65. Aspartate 69 and histidine 84 together coordinate a divalent metal cation. Residues 69–75 (DEIKKLP), 84–87 (HFAD), and 94–99 (NYEYSR) contribute to the substrate site. 3 disulfides stabilise this stretch: cysteine 93/cysteine 241, cysteine 101/cysteine 106, and cysteine 221/cysteine 228. 2 residues coordinate substrate: asparagine 113 and tyrosine 131. Residue asparagine 113 is glycosylated (N-linked (GlcNAc...) asparagine). Residue asparagine 132 is glycosylated (N-linked (GlcNAc...) asparagine). A divalent metal cation contacts are provided by histidine 142, aspartate 146, histidine 152, histidine 176, and aspartate 180. Residues 142 to 191 (HYMGDIHQPLHEGFIGDLGGNKIKVHWYNQETNLHRVWDDMIIESALETY) are substrate binding. 3 N-linked (GlcNAc...) asparagine glycosylation sites follow: asparagine 193, asparagine 224, and asparagine 247. Residues 279–294 (GTLNRIFSAKRKLARA) constitute a propeptide, removed in mature form.

It belongs to the nuclease type I family. As to quaternary structure, monomer. Zn(2+) is required as a cofactor. Requires Mn(2+) as cofactor.

It carries out the reaction Endonucleolytic cleavage to 5'-phosphomononucleotide and 5'-phosphooligonucleotide end-products.. In terms of biological role, endonuclease that can use RNA and single-stranded DNA as substrates. In contradiction with PubMed:23620482, cannot hydrolyze single-stranded DNA and does not cleave mismatches. The protein is Endonuclease 3 of Arabidopsis thaliana (Mouse-ear cress).